A 329-amino-acid polypeptide reads, in one-letter code: Ubiquitin carboxyl-terminal hydrolase isozyme L5 (329 aa).

A UCH catalytic domain is found at 7–225; that stretch reads EWCLMESDPG…IRFNLMAIVS (219 aa). Lys-47 carries the N6-succinyllysine modification. Catalysis depends on Cys-88, which acts as the Nucleophile. At Lys-158 the chain carries N6-acetyllysine. His-164 serves as the catalytic Proton donor. Position 289 is an N6-succinyllysine (Lys-289). Residues 291 to 319 form the ULD domain; the sequence is NYLPFIMELLKTLAEHQQLIPLVEKAKEK. The interaction with ADRM1 stretch occupies residues 313–329; it reads VEKAKEKQNAKKAQETK.

This sequence belongs to the peptidase C12 family. Component of the 19S (PA700) regulatory complex of the 26S proteasome. Interacts with ADRM1 and NFRKB; in vitro ADRM1 and NFRKB compete for interaction with UCHL5. Component of the INO80 complex; specifically part of a complex module associated with N-terminus of INO80.

The protein resides in the cytoplasm. The protein localises to the nucleus. It catalyses the reaction Thiol-dependent hydrolysis of ester, thioester, amide, peptide and isopeptide bonds formed by the C-terminal Gly of ubiquitin (a 76-residue protein attached to proteins as an intracellular targeting signal).. Activated by ADRM1. Inhibited by interaction with NFRKB. Protease that specifically cleaves 'Lys-48'-linked polyubiquitin chains. Deubiquitinating enzyme associated with the 19S regulatory subunit of the 26S proteasome. Putative regulatory component of the INO80 complex; however is inactive in the INO80 complex and is activated by a transient interaction of the INO80 complex with the proteasome via ADRM1. This chain is Ubiquitin carboxyl-terminal hydrolase isozyme L5 (UCHL5), found in Homo sapiens (Human).